The primary structure comprises 680 residues: Zinc finger protein OBI1 (680 aa).

Positions 16 to 87 constitute a KRAB domain; it reads VSFEDVAVDF…AEATEQCLPG (72 aa). The C2H2-type 1; degenerate zinc-finger motif lies at 263–280; it reads CHKIFPNKTELSNHDAMH. C2H2-type zinc fingers lie at residues 455-477, 483-505, 511-533, 539-561, 567-589, 595-617, 623-645, and 651-673; these read FRCNDCLKTFSHKSQLERHQRMH, HECKECRKAFCHKSHLIRHQGIH, YECNECKKSFYLRSQLTLHERTH, FECKECRKAFSRNSHLTQHQKIH, HKCKECGNAFARKSHLIQHQKTH, YECKECRKAFSRKSQLMQHETTH, YECKECRKTFYLKAYLTRHQVIH, and FECKKCGKAFSRKSYLTRHQKIH.

Post-translationally, polyubiquitinated, leading to its degradation via the ubiquitin-proteasome pathway. As to expression, expressed during osteogenic differentiation where levels increase from the first days of differentiation and remain high during the whole process. Highly expressed in lung.

The protein localises to the nucleus. Functionally, may modulate osteogenic differentiation, at least in part, through the bone morphogenetic protein (BMP) signaling pathway, increasing RUNX2 activation and leading to osteoblast commitment and maturation. This Mus musculus (Mouse) protein is Zinc finger protein OBI1 (ObI1).